We begin with the raw amino-acid sequence, 11103 residues long: Colossin-A (11103 aa).

Residues 1 to 35 form the signal peptide; it reads MGTIKTKFKNNYLKNSYLFIIYIILFNLVIGIANS. N-linked (GlcNAc...) asparagine glycosylation is found at asparagine 95, asparagine 120, asparagine 137, and asparagine 198. The Kelch 1 repeat unit spans residues 273 to 324; sequence NLFAVGNYVFFDVNRDGVHETTELFAPNVKVELYDAISSTRLIASTFTDLNG. Residues 298-359 form the CNA-B 1 domain; sequence APNVKVELYD…SNGPDNVINA (62 aa). Residues asparagine 372, asparagine 386, and asparagine 422 are each glycosylated (N-linked (GlcNAc...) asparagine). Residues 423 to 469 enclose the CNA-B 2 domain; that stretch reads LSGITVQLTTPSHVVLKTAQTDYAGNYVFDDLSEGVYSVHFILPENY. The N-linked (GlcNAc...) asparagine glycan is linked to asparagine 493. CNA-B domains follow at residues 551–599, 676–745, 803–871, 931–999, 1057–1095, and 1170–1231; these read LPGV…PDGY, VANV…INLT, APFV…FTLN, AEGV…IDLS, LPNI…EGDY, and LSNT…FNSS. Asparagine 678 is a glycosylation site (N-linked (GlcNAc...) asparagine). Residues asparagine 1059, asparagine 1229, and asparagine 1239 are each glycosylated (N-linked (GlcNAc...) asparagine). Residues 1277–1314 form the CNA-B 9 domain; that stretch reads ISNIPLSLISQKTNQIISSVVTDSNGKYQFEDVPPGDY. The N-linked (GlcNAc...) asparagine glycan is linked to asparagine 1329. 8 consecutive CNA-B domains span residues 1391–1458, 1494–1530, 1602–1651, 1708–1779, 1824–1891, 1927–1963, 2035–2086, and 2141–2177; these read SDVS…FKLT, LPGV…PGDY, LPGV…YKQV, LSDI…VTVK, LPGV…QVAQ, and VEGI…PGDY. N-linked (GlcNAc...) asparagine glycosylation occurs at asparagine 1613. The segment at 1716–1740 is disordered; it reads TDKDGNEISNTKSGPDGKYQFEDVP. 2 N-linked (GlcNAc...) asparagine glycosylation sites follow: asparagine 1759 and asparagine 1772. The N-linked (GlcNAc...) asparagine glycan is linked to asparagine 2046. N-linked (GlcNAc...) asparagine glycosylation is found at asparagine 2192 and asparagine 2311. CNA-B domains lie at 2254-2321, 2357-2402, 2465-2514, 2571-2640, 2687-2754, 2790-2835, 2898-2947, and 3004-3040; these read SDVS…FKLT, LPGV…TPIG, LPGV…YKQV, LSDI…NFVT, and LEGI…PGDY. A glycan (N-linked (GlcNAc...) asparagine) is linked at asparagine 2476. Positions 2580–2603 are disordered; it reads DKDGNEITNTKSGPDGKYQFEDVP. A glycan (N-linked (GlcNAc...) asparagine) is linked at asparagine 2622. 2 N-linked (GlcNAc...) asparagine glycosylation sites follow: asparagine 2801 and asparagine 2909. Residues asparagine 3048, asparagine 3055, and asparagine 3118 are each glycosylated (N-linked (GlcNAc...) asparagine). 4 consecutive CNA-B domains span residues 3117–3184, 3220–3256, 3328–3364, and 3434–3470; these read SNVS…FKLT, LPGV…PGDY, LPGV…PGSY, and VEGI…PGDY. A glycan (N-linked (GlcNAc...) asparagine) is linked at asparagine 3339. An N-linked (GlcNAc...) asparagine glycan is attached at asparagine 3485. A Kelch 2 repeat occupies 3503 to 3549; sequence SCFAVSGPLDNQNLGLSLFYEIGTMVWIDSNNNGKFEQPSDVLKSDV. CNA-B domains follow at residues 3547–3614, 3650–3686, and 3758–3809; these read SDVS…FKLT, LPGV…PGDY, and LPGV…QVAQ. N-linked (GlcNAc...) asparagine glycosylation is found at asparagine 3769 and asparagine 3827. Residues 3864-3900 form the CNA-B 33 domain; it reads LSDITIRLTDKDGKVIQSTTSGPDGKYQFEDVPPGDY. N-linked (GlcNAc...) asparagine glycosylation occurs at asparagine 3915. CNA-B domains follow at residues 3980 to 4047, 4083 to 4128, 4191 to 4240, 4297 to 4378, 4425 to 4492, 4528 to 4573, 4636 to 4685, and 4742 to 4778; these read SDVS…FKLT, LPGV…TPIG, LPGV…YKQV, LSDI…NFVT, and VEGI…PGDY. Asparagine 4202 is a glycosylation site (N-linked (GlcNAc...) asparagine). Residues 4286-4341 are disordered; that stretch reads NTGKQTDDSPPLSDITIRLTDKDGNEITKTKSRPDGNENSNTKSGPDGKYQFEDVP. Residues 4304–4321 show a composition bias toward basic and acidic residues; sequence LTDKDGNEITKTKSRPDG. An N-linked (GlcNAc...) asparagine glycan is attached at asparagine 4360. Asparagine 4647 carries N-linked (GlcNAc...) asparagine glycosylation. 2 N-linked (GlcNAc...) asparagine glycosylation sites follow: asparagine 4792 and asparagine 4918. 4 CNA-B domains span residues 4865–4928, 4964–5009, 5072–5123, and 5178–5214; these read ITLT…FKLT, LPGV…TPIG, LPGV…QVAQ, and LEGI…PGDY. N-linked (GlcNAc...) asparagine glycosylation is present at asparagine 5083. Residues asparagine 5229, asparagine 5292, and asparagine 5348 are each glycosylated (N-linked (GlcNAc...) asparagine). The stretch at 5247-5293 is one Kelch 3 repeat; the sequence is SCFAVSGPLDNQNLGLSPFYEIGTIVWIDSNNNDKFEQPSDIGKSNV. CNA-B domains lie at 5291–5358, 5394–5430, 5502–5553, and 5608–5644; these read SNVS…FKLT, LPGV…PGDY, LPGV…QVAQ, and LSDI…PGDY. Asparagine 5513 carries N-linked (GlcNAc...) asparagine glycosylation. N-linked (GlcNAc...) asparagine glycosylation is present at asparagine 5659. CNA-B domains lie at 5724–5791, 5827–5872, 5935–5984, and 6041–6077; these read SDVS…FKLT, LPGV…TPIG, LPGV…YKQV, and VEGI…PGDY. A glycan (N-linked (GlcNAc...) asparagine) is linked at asparagine 5946. Asparagine 6092 and asparagine 6155 each carry an N-linked (GlcNAc...) asparagine glycan. CNA-B domains follow at residues 6154-6221, 6257-6302, 6365-6416, and 6471-6507; these read SNVS…FKLT, LPGV…TPIG, LPGV…QDAQ, and LSDI…PGDY. The N-linked (GlcNAc...) asparagine glycan is linked to asparagine 6376. N-linked (GlcNAc...) asparagine glycans are attached at residues asparagine 6522 and asparagine 6535. 4 consecutive CNA-B domains span residues 6587 to 6654, 6690 to 6726, 6798 to 6849, and 6904 to 6940; these read SDVS…FKLT, LEGV…PGDY, LPGV…QVNQ, and VEGI…PGDY. 3 N-linked (GlcNAc...) asparagine glycosylation sites follow: asparagine 6701, asparagine 6809, and asparagine 6848. Asparagine 6954, asparagine 7080, asparagine 7137, and asparagine 7245 each carry an N-linked (GlcNAc...) asparagine glycan. 8 CNA-B domains span residues 7023 to 7090, 7126 to 7171, 7234 to 7285, 7340 to 7411, 7456 to 7523, 7559 to 7596, 7668 to 7719, and 7774 to 7810; these read SDVS…FKLT, LAGV…TPIG, LPGV…QDAQ, LSDI…VTVK, LPGV…PGDY, LTGV…QVAQ, and VEGI…PGDY. Residues 7351–7372 are disordered; the sequence is DGNEITNTKSGPDGKYQFEDVP. Asparagine 7391 and asparagine 7404 each carry an N-linked (GlcNAc...) asparagine glycan. An N-linked (GlcNAc...) asparagine glycan is attached at asparagine 7679. 2 N-linked (GlcNAc...) asparagine glycosylation sites follow: asparagine 7825 and asparagine 7837. CNA-B domains are found at residues 7887 to 7954, 7990 to 8035, 8098 to 8149, 8204 to 8265, 8313 to 8374, 8420 to 8456, and 8528 to 8587; these read SDVS…FKLT, LPGV…TPIG, LPGV…QVAQ, IPNI…FSLS, VGKS…VVDQ, LPGV…QGDY, and LPGI…PFDS. N-linked (GlcNAc...) asparagine glycosylation is found at asparagine 8109 and asparagine 8255. Residues asparagine 8441, asparagine 8539, asparagine 8629, asparagine 8636, asparagine 8655, asparagine 8693, asparagine 8753, asparagine 8811, asparagine 8896, asparagine 8930, asparagine 8976, asparagine 9023, asparagine 9073, asparagine 9087, asparagine 9123, asparagine 9137, asparagine 9146, asparagine 9149, asparagine 9186, asparagine 9297, asparagine 9305, asparagine 9349, asparagine 9409, asparagine 9419, asparagine 9533, asparagine 9543, asparagine 9556, asparagine 9601, asparagine 9709, asparagine 9718, asparagine 9786, asparagine 9839, asparagine 9850, asparagine 9867, asparagine 9891, asparagine 9941, asparagine 9957, asparagine 9989, asparagine 10042, asparagine 10096, asparagine 10111, asparagine 10174, asparagine 10267, asparagine 10315, asparagine 10348, asparagine 10360, asparagine 10379, asparagine 10394, asparagine 10431, asparagine 10477, asparagine 10552, asparagine 10581, asparagine 10715, asparagine 10786, asparagine 10802, asparagine 10943, and asparagine 11018 are each glycosylated (N-linked (GlcNAc...) asparagine). One copy of the Kelch 4 repeat lies at 8592 to 8638; that stretch reads CFDLLDKSITNANLGLIPLYNIGSDAWLDNLNNGVRRNDSLLVPNVT. A CNA-B 77 domain is found at 8634–8680; that stretch reads VPNVTMSLYDNNGNLIETTITNSSGKYQFNDIQPGSYCVRATVPSNY. The region spanning 8751–8810 is the CNA-B 78 domain; it reads LPNVTVQLYDKVSGNILAATRSDDKGGYVVPNLLPSADYCVQFEVPPGYIVVVDSDDSVT. The CNA-B 79 domain maps to 8965 to 9014; that stretch reads LPGVSVSLFSPNGTSIANTITDENGKYAFKDQVPGSYCIKMIIPPHYQQV. Positions 9071-9107 constitute a CNA-B 80 domain; sequence VPNITMTLLDSQGKQINSTITNANGFYQFVDVAPGNY. In terms of domain architecture, CNA-B 81 spans 9185 to 9220; sequence ANVSLSLVNTGNSEIKTTTTNSQGKYSFGQLLAGNY. The 34-residue stretch at 9299-9332 folds into the CNA-B 82 domain; that stretch reads TITLTPNNTALPTQTTTTDVNGNYRFDNLVVGNY. 2 consecutive CNA-B domains span residues 9407–9447 and 9531–9569; these read LVNI…VVQF and MANI…PGNY. Residues 9659–9728 form the CNA-B 85 domain; the sequence is VEGITVRIYD…ATGYISIDLS (70 aa). One can recognise a CNA-B 86 domain in the interval 10044-10103; it reads TLFNADGSTPNDIFGKPIQMAVTDVNGKYSIPNVPPGSYYMTVSIPPRYIISNFTTTGLV. The CNA-B 87 domain occupies 10172–10236; sequence LPNVTVLLLN…ITPTKLVSTS (65 aa). Residues 10313 to 10370 enclose the CNA-B 88 domain; the sequence is PGNFTVQLKSANQAVNGGLTTVPIGTVVATSPVAANGSFSIPNLQLGNYTLTLIPPSG.

Belongs to the serine-aspartate repeat-containing protein (SDr) family.

The protein resides in the secreted. This Dictyostelium discoideum (Social amoeba) protein is Colossin-A (colA).